Consider the following 225-residue polypeptide: Insulin-induced gene 2 protein (225 aa).

Topologically, residues 1-28 are cytoplasmic; it reads MAENDAKPTLPKKSGPYISSVTSHGMNL. A helical transmembrane segment spans residues 29–51; that stretch reads VIRGIVLFFIGVFLALVLNLLQI. At 52 to 70 the chain is on the lumenal side; that stretch reads QRNVTLFPPDVITSIFSSA. A helical membrane pass occupies residues 71 to 88; sequence WWVPPCCGTASAVIGLLY. Over 89 to 103 the chain is Cytoplasmic; that stretch reads PCMDRHLGEPHKFKR. A helical membrane pass occupies residues 104–126; sequence EWSSVMRCVAVFVGINHASAKVD. Topologically, residues 127–129 are lumenal; the sequence is FAN. Residues 130–148 traverse the membrane as a helical segment; it reads NIQLSLTLAALSIGLWWTF. Topologically, residues 149–153 are cytoplasmic; that stretch reads DRSRS. A helical transmembrane segment spans residues 154 to 175; that stretch reads GFGLGVGIAFLATLVSQLLVYN. The Lumenal portion of the chain corresponds to 176-189; sequence GVYQYTSPDFLYVR. The helical transmembrane segment at 190 to 207 threads the bilayer; that stretch reads SWLPCIFFAGGITMGNIG. Over 208–225 the chain is Cytoplasmic; that stretch reads RQLAMYECKVIAEKSHED. The KxHxx signature appears at 219–225; sequence AEKSHED.

The protein belongs to the INSIG family. Interacts with SCAP; interaction is direct and only takes place in the presence of sterols; it prevents interaction between SCAP and the coat protein complex II (COPII). Associates with the SCAP-SREBP complex; association is mediated via its interaction with SCAP and only takes place in the presence of sterols.

The protein resides in the endoplasmic reticulum membrane. Oxysterol-binding protein that mediates feedback control of cholesterol synthesis by controlling both endoplasmic reticulum to Golgi transport of SCAP and degradation of HMGCR. Acts as a negative regulator of cholesterol biosynthesis by mediating the retention of the SCAP-SREBP complex in the endoplasmic reticulum, thereby blocking the processing of sterol regulatory element-binding proteins (SREBPs). Binds oxysterol, including 22-hydroxycholesterol, 24-hydroxycholesterol, 25-hydroxycholesterol and 27-hydroxycholesterol, regulating interaction with SCAP and retention of the SCAP-SREBP complex in the endoplasmic reticulum. In presence of oxysterol, interacts with SCAP, retaining the SCAP-SREBP complex in the endoplasmic reticulum, thereby preventing SCAP from escorting SREBPs to the Golgi. Sterol deprivation reduces oxysterol-binding, disrupting the interaction between INSIG2 and SCAP, thereby promoting Golgi transport of the SCAP-SREBP complex, followed by processing and nuclear translocation of SREBPs. Also regulates cholesterol synthesis by regulating degradation of HMGCR. The protein is Insulin-induced gene 2 protein of Gallus gallus (Chicken).